The chain runs to 552 residues: Non-structural protein NS1 (552 aa).

Belongs to the orbivirus non-structural protein NS1 family.

This Antilocapra americana (Pronghorn) protein is Non-structural protein NS1 (Segment-5).